A 157-amino-acid chain; its full sequence is Small ribosomal subunit protein uS7 (157 aa).

This sequence belongs to the universal ribosomal protein uS7 family. In terms of assembly, part of the 30S ribosomal subunit. Contacts proteins S9 and S11.

One of the primary rRNA binding proteins, it binds directly to 16S rRNA where it nucleates assembly of the head domain of the 30S subunit. Is located at the subunit interface close to the decoding center, probably blocks exit of the E-site tRNA. This Psychrobacter sp. (strain PRwf-1) protein is Small ribosomal subunit protein uS7.